The following is a 241-amino-acid chain: 4-hydroxy-tetrahydrodipicolinate reductase (241 aa).

NAD(+) contacts are provided by residues 80–82 (ATT) and 104–107 (SANM). Catalysis depends on histidine 136, which acts as the Proton donor/acceptor. Histidine 137 contributes to the (S)-2,3,4,5-tetrahydrodipicolinate binding site. Catalysis depends on lysine 140, which acts as the Proton donor. 146–147 (GT) is a binding site for (S)-2,3,4,5-tetrahydrodipicolinate.

The protein belongs to the DapB family.

It localises to the cytoplasm. It carries out the reaction (S)-2,3,4,5-tetrahydrodipicolinate + NAD(+) + H2O = (2S,4S)-4-hydroxy-2,3,4,5-tetrahydrodipicolinate + NADH + H(+). The enzyme catalyses (S)-2,3,4,5-tetrahydrodipicolinate + NADP(+) + H2O = (2S,4S)-4-hydroxy-2,3,4,5-tetrahydrodipicolinate + NADPH + H(+). The protein operates within amino-acid biosynthesis; L-lysine biosynthesis via DAP pathway; (S)-tetrahydrodipicolinate from L-aspartate: step 4/4. In terms of biological role, catalyzes the conversion of 4-hydroxy-tetrahydrodipicolinate (HTPA) to tetrahydrodipicolinate. This is 4-hydroxy-tetrahydrodipicolinate reductase from Staphylococcus haemolyticus (strain JCSC1435).